We begin with the raw amino-acid sequence, 76 residues long: U-scoloptoxin(13)-Sa1a (76 aa).

The first 22 residues, 1 to 22 (MAYIFALIFAFVVCINTDVIQA), serve as a signal peptide directing secretion.

It belongs to the scoloptoxin-13 family. In terms of processing, contains 4 disulfide bonds. In terms of tissue distribution, expressed by the venom gland.

Its subcellular location is the secreted. This Scolopendra alternans (Florida Keys giant centipede) protein is U-scoloptoxin(13)-Sa1a.